The following is a 595-amino-acid chain: Probable inactive glycosyltransferase 25 family member 3 (595 aa).

An N-terminal signal peptide occupies residues 1-24 (MRAAPAAPLLQLLLLLGPRPEAAG). Residues Asn-75, Asn-153, Asn-237, and Asn-360 are each glycosylated (N-linked (GlcNAc...) asparagine). A disordered region spans residues 576 to 595 (RLDLAGGSGHSLRPHPRDEL). The Prevents secretion from ER signature appears at 592–595 (RDEL).

This sequence belongs to the glycosyltransferase 25 family.

The protein resides in the endoplasmic reticulum lumen. Functionally, probable cell adhesion protein involved in leukocyte transmigration across the blood-brain barrier. Does not express any beta-galactosyltransferase activity in vitro. The sequence is that of Probable inactive glycosyltransferase 25 family member 3 (CERCAM) from Bos taurus (Bovine).